We begin with the raw amino-acid sequence, 361 residues long: RNA 3'-terminal phosphate cyclase (361 aa).

Residues Gln105, Pro132, Tyr295, Asp298, Gln299, and His321 each contribute to the ATP site. His321 functions as the Tele-AMP-histidine intermediate in the catalytic mechanism.

It belongs to the RNA 3'-terminal cyclase family. Type 1 subfamily.

Its subcellular location is the nucleus. It is found in the nucleoplasm. It catalyses the reaction a 3'-end 3'-phospho-ribonucleotide-RNA + ATP = a 3'-end 2',3'-cyclophospho-ribonucleotide-RNA + AMP + diphosphate. Catalyzes the conversion of 3'-phosphate to a 2',3'-cyclic phosphodiester at the end of RNA. The mechanism of action of the enzyme occurs in 3 steps: (A) adenylation of the enzyme by ATP; (B) transfer of adenylate to an RNA-N3'P to produce RNA-N3'PP5'A; (C) and attack of the adjacent 2'-hydroxyl on the 3'-phosphorus in the diester linkage to produce the cyclic end product. Likely functions in some aspects of cellular RNA processing. Function plays an important role in a RNA repair and splicing pathway which controls axon regeneration in response to peripheral (PNS) and central nervous system (CNS) injury. In response to axotomy, negatively regulates splicing of Xbp1 which in turn activates downstream effectors which inhibit axon regeneration, including down-regulating the microtubule regulators ringer and futsch. The protein is RNA 3'-terminal phosphate cyclase of Drosophila melanogaster (Fruit fly).